We begin with the raw amino-acid sequence, 253 residues long: ER membrane protein complex subunit 3 (253 aa).

The next 3 helical transmembrane spans lie at 10–30 (WVLLPISIVMVLTGVLKQYIM), 126–146 (FIPQTIIMWWVNHFFAGFILM), and 176–196 (SISWYFISVLGLNPVYNLIGL).

The protein belongs to the EMC3 family. As to quaternary structure, component of the ER membrane protein complex (EMC), which is composed of EMC1, EMC2, EMC3, EMC4, EMC5 and EMC6.

Its subcellular location is the endoplasmic reticulum membrane. Functionally, the EMC seems to be required for efficient folding of proteins in the endoplasmic reticulum (ER). This Saccharomyces cerevisiae (strain RM11-1a) (Baker's yeast) protein is ER membrane protein complex subunit 3 (AIM27).